The chain runs to 32 residues: Potassium channel toxin alpha-KTx 10.6 (32 aa).

Disulfide bonds link cysteine 3–cysteine 22, cysteine 8–cysteine 27, and cysteine 12–cysteine 29.

As to expression, expressed by the venom gland.

Its subcellular location is the secreted. Its function is as follows. Blocks human voltage-gated potassium (Kv) channels Kv1.2/KCNA2 and Kv1.3/KCNA3. Does not block human Kv1.1 at 100nM concentration. This is Potassium channel toxin alpha-KTx 10.6 from Centruroides bonito (Scorpion).